The following is a 283-amino-acid chain: uncharacterized protein (283 aa).

Asp121 is a catalytic residue.

The protein belongs to the pseudouridine synthase RluA family.

The catalysed reaction is a uridine in RNA = a pseudouridine in RNA. This is an uncharacterized protein from Bacillus subtilis (strain 168).